We begin with the raw amino-acid sequence, 247 residues long: Unique short US9 glycoprotein (247 aa).

The first 27 residues, 1–27, serve as a signal peptide directing secretion; sequence MILWSPSTCSFFWHWCLIAVSVLSSRS. Residues 28–192 lie on the Lumenal side of the membrane; it reads KESLRLSWSS…ERLFAERRYL (165 aa). Residues 72–168 enclose the Ig-like H-type domain; it reads YRVSSSVSEC…RSVLHCRPAS (97 aa). A disulfide bond links cysteine 81 and cysteine 164. Asparagine 97 and asparagine 158 each carry an N-linked (GlcNAc...) asparagine; by host glycan. The helical transmembrane segment at 193–213 threads the bilayer; that stretch reads TFLYVVLVQFVKHVALFSFGV. Residues 214–247 lie on the Cytoplasmic side of the membrane; it reads QVACCVYLRWIRPWVRGRHRATGRTSREEEAKDD.

It belongs to the cytomegalovirus US6 family.

Its subcellular location is the host endoplasmic reticulum membrane. It is found in the host cytoplasm. It localises to the host cytoskeleton. The protein resides in the host Golgi apparatus membrane. Functionally, influences cell-to-cell spread of virus in polarized cells. Promotes dissemination of virus across cell-cell junctions of polarized epithelial cells, maybe through the association with the cytoskeletal matrix. This chain is Unique short US9 glycoprotein (US9), found in Homo sapiens (Human).